Reading from the N-terminus, the 212-residue chain is MGPYLPAILRPIGRYATLYNVPRVAGQLRCYAADAKDAADAQGESAADPRVAELEKQLADKSKEAADLKDRLLRSVADFRNLQEVTRRDVQKARDFALQRFSKDLLESLDNFGHALGAVSPEALQRSPEIADLHAGVRLTRDVFEKTLLKHGIAPIDALGQPFDPNLHEATFELPQPDKTPGTVFHVQQPGYTLNGRVIRPAKVGVVKDPDA.

Belongs to the GrpE family. As to quaternary structure, component of the PAM complex, at least composed of mtHsp70, MGE1, TIM44, PAM16, PAM17 and PAM18.

It localises to the mitochondrion matrix. Its function is as follows. Essential component of the PAM complex, a complex required for the translocation of transit peptide-containing proteins from the inner membrane into the mitochondrial matrix in an ATP-dependent manner. Seems to control the nucleotide-dependent binding of SSC1 to substrate proteins. This Eremothecium gossypii (strain ATCC 10895 / CBS 109.51 / FGSC 9923 / NRRL Y-1056) (Yeast) protein is GrpE protein homolog, mitochondrial (mge1).